The following is a 1077-amino-acid chain: Error-prone DNA polymerase (1077 aa).

This sequence belongs to the DNA polymerase type-C family. DnaE2 subfamily.

It localises to the cytoplasm. It catalyses the reaction DNA(n) + a 2'-deoxyribonucleoside 5'-triphosphate = DNA(n+1) + diphosphate. In terms of biological role, DNA polymerase involved in damage-induced mutagenesis and translesion synthesis (TLS). It is not the major replicative DNA polymerase. This is Error-prone DNA polymerase from Brucella suis biovar 1 (strain 1330).